Here is a 269-residue protein sequence, read N- to C-terminus: MVRIAIAGAAGRMGRNLVKATHQNPLSELGAGSERPESSLVGVDIGELCGIGKQGIVLVDNLEQAVEQFDVIIDFTAPASTLANLALCEQHGKKLVIGTTGFTDAQRQTIEQAAKKIPIVMAPNYSVGVNLVFKLLEKAAKVMGDYCDIEIIEAHHRHKVDAPSGTAIGMGEAIAHAMGNQLSDVAVYAREGITGERSRNEIGFATIRAGDIIGEHTAMFADIGERVEITHKATDRMTFANGAVKAAIWLAEQPAGFYTMIDVLGLNDL.

Residues 8–13 (GAAGRM) and E34 each bind NAD(+). R35 lines the NADP(+) pocket. NAD(+) is bound by residues 98-100 (GTT) and 122-125 (APNY). Catalysis depends on H155, which acts as the Proton donor/acceptor. H156 is a binding site for (S)-2,3,4,5-tetrahydrodipicolinate. Residue K159 is the Proton donor of the active site. (S)-2,3,4,5-tetrahydrodipicolinate is bound at residue 165-166 (GT).

It belongs to the DapB family.

It is found in the cytoplasm. The catalysed reaction is (S)-2,3,4,5-tetrahydrodipicolinate + NAD(+) + H2O = (2S,4S)-4-hydroxy-2,3,4,5-tetrahydrodipicolinate + NADH + H(+). The enzyme catalyses (S)-2,3,4,5-tetrahydrodipicolinate + NADP(+) + H2O = (2S,4S)-4-hydroxy-2,3,4,5-tetrahydrodipicolinate + NADPH + H(+). It participates in amino-acid biosynthesis; L-lysine biosynthesis via DAP pathway; (S)-tetrahydrodipicolinate from L-aspartate: step 4/4. Its function is as follows. Catalyzes the conversion of 4-hydroxy-tetrahydrodipicolinate (HTPA) to tetrahydrodipicolinate. The sequence is that of 4-hydroxy-tetrahydrodipicolinate reductase from Vibrio cholerae serotype O1 (strain ATCC 39315 / El Tor Inaba N16961).